The following is a 466-amino-acid chain: 3-isopropylmalate dehydratase large subunit (466 aa).

Residues Cys347, Cys407, and Cys410 each coordinate [4Fe-4S] cluster.

It belongs to the aconitase/IPM isomerase family. LeuC type 1 subfamily. As to quaternary structure, heterodimer of LeuC and LeuD. [4Fe-4S] cluster is required as a cofactor.

The enzyme catalyses (2R,3S)-3-isopropylmalate = (2S)-2-isopropylmalate. It participates in amino-acid biosynthesis; L-leucine biosynthesis; L-leucine from 3-methyl-2-oxobutanoate: step 2/4. Functionally, catalyzes the isomerization between 2-isopropylmalate and 3-isopropylmalate, via the formation of 2-isopropylmaleate. In Shigella boydii serotype 4 (strain Sb227), this protein is 3-isopropylmalate dehydratase large subunit.